Consider the following 235-residue polypeptide: NADH-quinone oxidoreductase subunit C (235 aa).

It belongs to the complex I 30 kDa subunit family. In terms of assembly, NDH-1 is composed of 14 different subunits. Subunits NuoB, C, D, E, F, and G constitute the peripheral sector of the complex.

Its subcellular location is the cell membrane. It catalyses the reaction a quinone + NADH + 5 H(+)(in) = a quinol + NAD(+) + 4 H(+)(out). Functionally, NDH-1 shuttles electrons from NADH, via FMN and iron-sulfur (Fe-S) centers, to quinones in the respiratory chain. The immediate electron acceptor for the enzyme in this species is believed to be a menaquinone. Couples the redox reaction to proton translocation (for every two electrons transferred, four hydrogen ions are translocated across the cytoplasmic membrane), and thus conserves the redox energy in a proton gradient. This Mycolicibacterium paratuberculosis (strain ATCC BAA-968 / K-10) (Mycobacterium paratuberculosis) protein is NADH-quinone oxidoreductase subunit C.